A 419-amino-acid chain; its full sequence is Alpha-galactosidase A (419 aa).

A signal peptide spans 1 to 31; sequence MKLLSRDTRLVCELALCPLALVFWSILGVRA. 2 disulfides stabilise this stretch: C52–C94 and C56–C63. The N-linked (GlcNAc...) asparagine glycan is linked to N139. C142 and C172 are joined by a disulfide. The active-site Nucleophile is the D170. A Phosphotyrosine modification is found at Y186. An N-linked (GlcNAc...) asparagine glycan is attached at N192. C202 and C223 are oxidised to a cystine. Substrate is bound at residue 203-207; it reads EWPLY. N-linked (GlcNAc...) asparagine glycosylation is present at N215. D231 serves as the catalytic Proton donor. C378 and C382 are joined by a disulfide.

Belongs to the glycosyl hydrolase 27 family. In terms of assembly, homodimer.

The protein resides in the lysosome. The catalysed reaction is Hydrolysis of terminal, non-reducing alpha-D-galactose residues in alpha-D-galactosides, including galactose oligosaccharides, galactomannans and galactolipids.. It catalyses the reaction a globoside Gb3Cer (d18:1(4E)) + H2O = a beta-D-Gal-(1-&gt;4)-beta-D-Glc-(1&lt;-&gt;1)-Cer(d18:1(4E)) + D-galactose. The enzyme catalyses a globoside Gb3Cer + H2O = a beta-D-galactosyl-(1-&gt;4)-beta-D-glucosyl-(1&lt;-&gt;1)-ceramide + D-galactose. With respect to regulation, galactosylgalactosylglucosylceramidase activity is stimulated by saposin B and ammonium chloride. Catalyzes the hydrolysis of glycosphingolipids and participates in their degradation in the lysosome. The polypeptide is Alpha-galactosidase A (Mus musculus (Mouse)).